The following is a 210-amino-acid chain: 7-carboxy-7-deazaguanine synthase (210 aa).

Substrate contacts are provided by residues 12–14 (LQG) and arginine 27. The Radical SAM core domain maps to 18–210 (QAGKAAVFCR…VQTHKYLGLP (193 aa)). Positions 31, 46, and 49 each coordinate [4Fe-4S] cluster. A Mg(2+)-binding site is contributed by threonine 51. A substrate-binding site is contributed by threonine 90. Residues glycine 92, 133 to 135 (SPK), and 173 to 176 (QPMD) each bind S-adenosyl-L-methionine. Position 210 (proline 210) interacts with substrate.

Belongs to the radical SAM superfamily. 7-carboxy-7-deazaguanine synthase family. As to quaternary structure, homodimer. [4Fe-4S] cluster is required as a cofactor. It depends on S-adenosyl-L-methionine as a cofactor. Mg(2+) serves as cofactor.

It catalyses the reaction 6-carboxy-5,6,7,8-tetrahydropterin + H(+) = 7-carboxy-7-deazaguanine + NH4(+). It functions in the pathway purine metabolism; 7-cyano-7-deazaguanine biosynthesis. Functionally, catalyzes the complex heterocyclic radical-mediated conversion of 6-carboxy-5,6,7,8-tetrahydropterin (CPH4) to 7-carboxy-7-deazaguanine (CDG), a step common to the biosynthetic pathways of all 7-deazapurine-containing compounds. The chain is 7-carboxy-7-deazaguanine synthase from Caulobacter vibrioides (strain ATCC 19089 / CIP 103742 / CB 15) (Caulobacter crescentus).